Consider the following 280-residue polypeptide: Small ribosomal subunit protein uS15m (280 aa).

The protein belongs to the universal ribosomal protein uS15 family. In terms of assembly, component of the mitochondrial ribosome small subunit (28S) which comprises a 12S rRNA and about 30 distinct proteins. As to expression, expressed in anterior and posterior midgut primordia in stage 11 embryos. In stage 13 embryos, expression is high in the developing midgut and hindgut. In stage 16 embryos, expression is elevated in the midgut, hindgut, and in a small region that will give rise to pharyngeal muscles and to the stomatogastric nervous system. In larvae, expression is predominant in the gut, and head, presumably in pharyngeal muscles.

The protein resides in the mitochondrion. Its function is as follows. Essential for gut mitochondrial activity. Might be involved in tissue specific growth factor production. The protein is Small ribosomal subunit protein uS15m (bonsai) of Drosophila melanogaster (Fruit fly).